A 293-amino-acid chain; its full sequence is Protease HtpX (293 aa).

2 helical membrane passes run 4–24 (IALF…VLSL) and 34–54 (GLMI…LLMS). Residue H139 participates in Zn(2+) binding. E140 is a catalytic residue. H143 is a Zn(2+) binding site. 2 consecutive transmembrane segments (helical) span residues 158–178 (VVNT…AGFL) and 193–213 (MVYF…ASII). E222 is a Zn(2+) binding site.

The protein belongs to the peptidase M48B family. The cofactor is Zn(2+).

It localises to the cell inner membrane. In Yersinia pseudotuberculosis serotype O:1b (strain IP 31758), this protein is Protease HtpX.